The following is a 114-amino-acid chain: Large ribosomal subunit protein bL20 (114 aa).

Belongs to the bacterial ribosomal protein bL20 family.

Binds directly to 23S ribosomal RNA and is necessary for the in vitro assembly process of the 50S ribosomal subunit. It is not involved in the protein synthesizing functions of that subunit. This Amoebophilus asiaticus (strain 5a2) protein is Large ribosomal subunit protein bL20.